Consider the following 131-residue polypeptide: Large ribosomal subunit protein bL12 (131 aa).

It belongs to the bacterial ribosomal protein bL12 family. As to quaternary structure, homodimer. Part of the ribosomal stalk of the 50S ribosomal subunit. Forms a multimeric L10(L12)X complex, where L10 forms an elongated spine to which 2 to 4 L12 dimers bind in a sequential fashion. Binds GTP-bound translation factors.

Forms part of the ribosomal stalk which helps the ribosome interact with GTP-bound translation factors. Is thus essential for accurate translation. This is Large ribosomal subunit protein bL12 from Prochlorococcus marinus (strain MIT 9312).